We begin with the raw amino-acid sequence, 21 residues long: Putative NADH dehydrogenase subunit PS9 (21 aa).

This is Putative NADH dehydrogenase subunit PS9 from Pinus strobus (Eastern white pine).